Reading from the N-terminus, the 544-residue chain is MSAALTETPAWQALQAHFETLHSVHLRDLFAADPGRGERLTAEGAGLYLDYSKHRVTDETLDLLVALAHARGLPERRDAMFGGEKINVTEGRAVLHTALRAPRGSDVLVDGRNVVPDVHEVLERMAAFAQQVRSGSWLGHTGKPIRAIVNIGIGGSDLGPVMAYEALRHYAQRELTVRFVSNVDGTDLVEKTRDLTAEETLFIVSSKTFTTQETMANAQSARAWLLSALGDEAAVARHFVAVSTNAEAVQKFGIDTANMFEFWDWVGGRYSMDSAIGLSLMLAIGPDGFRELLSGFHDMDEHFRTAPLEANLPVLMGLLGVWYNNFFGAETLAVLPYDQYLAYFPAYLQQLDMESNGKHVTLDGQEVTYQTGPVVWGQPGTNGQHAFYQLIHQGTKLIPCDFIAFAQTLNPLPLPGGAPHHDLLMANVFAQTEALAFGKTLEEVLAEGVDAALAPHRVFDGNRPTSTLLVDRLTPRTLGALIALYEHKVFVQGVIWDVNSFDQWGVELGKVLARRIVKELGADEPELSHDSSTNALIRRYRERR.

The active-site Proton donor is the glutamate 354. Active-site residues include histidine 385 and lysine 510.

The protein belongs to the GPI family.

The protein localises to the cytoplasm. The catalysed reaction is alpha-D-glucose 6-phosphate = beta-D-fructose 6-phosphate. Its pathway is carbohydrate biosynthesis; gluconeogenesis. The protein operates within carbohydrate degradation; glycolysis; D-glyceraldehyde 3-phosphate and glycerone phosphate from D-glucose: step 2/4. Functionally, catalyzes the reversible isomerization of glucose-6-phosphate to fructose-6-phosphate. The polypeptide is Glucose-6-phosphate isomerase (Deinococcus deserti (strain DSM 17065 / CIP 109153 / LMG 22923 / VCD115)).